Here is a 327-residue protein sequence, read N- to C-terminus: RING-H2 finger protein ATL34 (327 aa).

An N-terminal signal peptide occupies residues M1 to G26. A helical membrane pass occupies residues A47 to C67. The RING-type; atypical zinc finger occupies C128–R170. The disordered stretch occupies residues L280 to V327. A compositionally biased stretch (basic and acidic residues) spans S303 to V327.

This sequence belongs to the RING-type zinc finger family. ATL subfamily.

It localises to the membrane. The enzyme catalyses S-ubiquitinyl-[E2 ubiquitin-conjugating enzyme]-L-cysteine + [acceptor protein]-L-lysine = [E2 ubiquitin-conjugating enzyme]-L-cysteine + N(6)-ubiquitinyl-[acceptor protein]-L-lysine.. The protein operates within protein modification; protein ubiquitination. In Arabidopsis thaliana (Mouse-ear cress), this protein is RING-H2 finger protein ATL34 (ATL34).